A 212-amino-acid chain; its full sequence is Fucoxanthin-chlorophyll a-c binding protein E, chloroplastic (212 aa).

The transit peptide at 1 to 34 (MAIACAAAPGLRGAEPFNGAALATSAKSSSAMKM) directs the protein to the chloroplast. 3 consecutive transmembrane segments (helical) span residues 76–96 (IAMLAVVGHITQQNTRLPGML), 117–137 (IPPLGTLQIILAIGCHELFVV), and 178–198 (GRAAQMGILAMMVHEQLSNQP).

It belongs to the fucoxanthin chlorophyll protein family. The LHC complex of chromophytic algae is composed of fucoxanthin, chlorophyll A and C bound non-covalently by fucoxanthin chlorophyll proteins (FCPs). The ratio of pigments in this LHC is; fucoxanthin: chlorophyll C: chlorophyll A; (0.6-1): (0.1-0.3): (1).

It is found in the plastid. The protein resides in the chloroplast thylakoid membrane. Functionally, the light-harvesting complex (LHC) functions as a light receptor, it captures and delivers excitation energy to photosystems with which it is closely associated. Energy is transferred from the carotenoid and chlorophyll C (or B) to chlorophyll A and the photosynthetic reaction centers where it is used to synthesize ATP and reducing power. This chain is Fucoxanthin-chlorophyll a-c binding protein E, chloroplastic (FCPE), found in Macrocystis pyrifera (Giant kelp).